Consider the following 363-residue polypeptide: U-box domain-containing protein 62 (363 aa).

A disordered region spans residues 74–117 (KPIIGNPNDSGGSDGEDDVDVEEEDEDDDLDGNEGDIGMNKDAG). Positions 87-107 (DGEDDVDVEEEDEDDDLDGNE) are enriched in acidic residues. The 73-residue stretch at 181 to 253 (SLRTILSDPT…QAFCREENSQ (73 aa)) folds into the U-box domain. Positions 343–363 (AKAPEDPSAKATPNKMVSNWL) are disordered.

It catalyses the reaction S-ubiquitinyl-[E2 ubiquitin-conjugating enzyme]-L-cysteine + [acceptor protein]-L-lysine = [E2 ubiquitin-conjugating enzyme]-L-cysteine + N(6)-ubiquitinyl-[acceptor protein]-L-lysine.. Its pathway is protein modification; protein ubiquitination. Functionally, functions as an E3 ubiquitin ligase. The chain is U-box domain-containing protein 62 (PUB62) from Arabidopsis thaliana (Mouse-ear cress).